The sequence spans 382 residues: ATP phosphoribosyltransferase regulatory subunit (382 aa).

This sequence belongs to the class-II aminoacyl-tRNA synthetase family. HisZ subfamily. Heteromultimer composed of HisG and HisZ subunits.

The protein resides in the cytoplasm. The protein operates within amino-acid biosynthesis; L-histidine biosynthesis; L-histidine from 5-phospho-alpha-D-ribose 1-diphosphate: step 1/9. In terms of biological role, required for the first step of histidine biosynthesis. May allow the feedback regulation of ATP phosphoribosyltransferase activity by histidine. This is ATP phosphoribosyltransferase regulatory subunit from Burkholderia pseudomallei (strain 1106a).